A 308-amino-acid chain; its full sequence is Ribonuclease HIII (308 aa).

The RNase H type-2 domain occupies Met-93 to Ile-308. Residues Asp-99, Glu-100, and Asp-204 each contribute to the a divalent metal cation site.

The protein belongs to the RNase HII family. RnhC subfamily. Mn(2+) is required as a cofactor. The cofactor is Mg(2+).

It is found in the cytoplasm. The catalysed reaction is Endonucleolytic cleavage to 5'-phosphomonoester.. Functionally, endonuclease that specifically degrades the RNA of RNA-DNA hybrids. The sequence is that of Ribonuclease HIII from Lysinibacillus sphaericus (strain C3-41).